We begin with the raw amino-acid sequence, 1282 residues long: Protein crumbs homolog 2 (1282 aa).

The N-terminal stretch at 1–35 (MALVGPRIWGPRRDIYPLLLLLLLLLLLLLPWVPA) is a signal peptide. The Extracellular segment spans residues 36 to 1221 (GLVPPETPSV…PLPLPFPLLE (1186 aa)). Positions 71 to 110 (ELGGCATQPCHHGALCVPQGPDPNSFRCYCVPGFQGPHCE) constitute an EGF-like 1 domain. 27 cysteine pairs are disulfide-bonded: C75–C86, C80–C98, C100–C109, C116–C127, C121–C136, C138–C147, C154–C165, C159–C174, C176–C185, C192–C203, C197–C212, C214–C224, C231–C242, C236–C251, C253–C262, C269–C280, C274–C310, C312–C321, C328–C339, C333–C348, C350–C359, C366–C377, C371–C386, C388–C397, C404–C415, C409–C428, and C430–C439. The EGF-like 2; calcium-binding domain occupies 112–148 (DIDECASRPCQHGGTCQNLADHYECHCPLGYAGVTCE). The EGF-like 3; calcium-binding domain occupies 150–186 (EVDECSSAPCLHGGSCLDGVGSYRCVCAPGYAGANCQ). The region spanning 188–225 (DVDECQSQPCAHGGVCHDLVNGFRCDCADTGYEGARCE) is the EGF-like 4; calcium-binding domain. EGF-like domains follow at residues 227–263 (EVLECASAPCAHNASCLDGFRSFRCLCWPGFSGERCE) and 265–322 (DEDE…NDCS). N-linked (GlcNAc...) asparagine glycosylation occurs at N239. S271 is a glycosylation site (O-linked (Glc...) serine). Positions 324–360 (DVDECASGPCLNGGSCQDLPNGFQCYCQDGYTGLTCQ) constitute an EGF-like 7; calcium-binding domain. One can recognise an EGF-like 8; calcium-binding domain in the interval 362 to 398 (DMDECQSEPCLHGGTCSDTVAGYICQCPEAWGGHDCS). The region spanning 400–440 (QLTGCQGHTCPLAATCIPTFKSGLHGYFCRCPPGTYGPFCG) is the EGF-like 9 domain. N442 carries an N-linked (GlcNAc...) asparagine glycan. The 164-residue stretch at 444–607 (TFSVVSGSSV…ELKGTVLLGC (164 aa)) folds into the Laminin G-like 1 domain. Cystine bridges form between C583–C607, C613–C624, C618–C633, and C635–C644. One can recognise an EGF-like 10 domain in the interval 609–645 (RREPCQPLPCAHGGACVDLWTHFRCDCPRPYRGATCT). Residues 649–808 (PAATFGLGGA…GQSSNLTQGC (160 aa)) enclose the Laminin G-like 2 domain. N-linked (GlcNAc...) asparagine glycosylation is found at N672, N693, N789, and N803. 4 cysteine pairs are disulfide-bonded: C769–C808, C814–C825, C819–C834, and C836–C845. Residues 810–846 (SEDTCNPNPCFNGGTCHVTWNDFYCTCSENFTGPTCA) form the EGF-like 11 domain. N-linked (GlcNAc...) asparagine glycosylation is found at N839, N889, N929, and N1006. Residues 872–1051 (VAEATFREGP…PGSPAVSLGC (180 aa)) enclose the Laminin G-like 3 domain. 13 disulfides stabilise this stretch: C1010-C1051, C1057-C1068, C1062-C1077, C1079-C1088, C1095-C1105, C1100-C1115, C1117-C1126, C1135-C1147, C1141-C1156, C1158-C1167, C1174-C1185, C1179-C1194, and C1196-C1205. EGF-like domains lie at 1053–1089 (GGPVCSPSPCLHGGACRDLFDAFACSCGPAWEGPRCE), 1091–1127 (RADPCRSTPCVRGQCHARPDGRFECRCPPGFSGPRCR), 1131–1168 (LPQGCNLNSTCKDGAPCEGGPLGTNCSCQEGLAGLRCQ), and 1170–1206 (LDKPCEASPCLNGGTCRVASGIFECTCSAGFSGQFCE). N-linked (GlcNAc...) asparagine glycans are attached at residues N1138 and N1155. A helical membrane pass occupies residues 1222 to 1242 (VAVPAACACLLLLLLGLLSGI). The Cytoplasmic segment spans residues 1243-1282 (LAARKRRQSEGTYSPSQQEVAGARLEMDSVLKVPPEERLI). Residues 1246–1282 (RKRRQSEGTYSPSQQEVAGARLEMDSVLKVPPEERLI) form an interaction with EPB41L5 region.

It belongs to the Crumbs protein family. Interacts (via intracellular domain) with EPB41L5. Post-translationally, O-glucosylated by POGLUT1 at Ser-271; consists of an O-glucose trisaccharide, in which the O-glucose is elongated by the addition of two xylose residues. O-glucosylation is required for localization at the plasma membrane. In terms of tissue distribution, in the adult eye, strongly expressed in the outer nuclear layer, containing the cell bodies of the photoreceptor cells, and in the inner nuclear layer, containing the cell bodies of the horizontal, bipolar, amacrine, and Mueller glial cells. Also expressed in some cells in the ganglion cell layer (or may be displaced amacrine cells rather than ganglion cells).

Its subcellular location is the apical cell membrane. Apical polarity protein that plays a central role during the epithelial-to-mesenchymal transition (EMT) at gastrulation, when newly specified mesodermal cells move inside the embryo. Acts by promoting cell ingression, the process by which cells leave the epithelial epiblast and move inside the embryo to form a new tissue layer. The anisotropic distribution of CRB2 and MYH10/myosin-IIB at cell edges define which cells will ingress: cells with high apical CRB2 are probably extruded from the epiblast by neighboring cells with high levels of apical MYH10/myosin-IIB. Also required for maintenance of the apical polarity complex during development of the cortex. This chain is Protein crumbs homolog 2, found in Mus musculus (Mouse).